Reading from the N-terminus, the 332-residue chain is MAALKDQLIHNLLKEEHVPQNKITVVGVGAVGMACAISILMKDLADELALVDVMEDKLKGEMMDLQHGSLFLRTPKIVSGKDYSVTANSKLVIITAGARQQEGESRLNLVQRNVNIFKFIIPNVVKYSPHCKLLVVSNPVDILTYVAWKISGFPKNRVIGSGCNLDSARFRYLMGERLGVHALSCHGWILGEHGDSSVPVWSGMNVAGVSLKTLHPELGTDADKEQWKQVHKQVVDSAYEVIKLKGYTTWAIGLSVADLAESIMKNLRRVHPISTMLKGLYGIKEDVFLSVPCVLGQNGISDVVKVTLTSEEEAHLKKSADTLWGIQKELQF.

An N-acetylalanine modification is found at A2. At K5 the chain carries N6-acetyllysine; alternate. An N6-succinyllysine; alternate modification is found at K5. Position 14 is an N6-acetyllysine (K14). 29–57 (GAVGMACAISILMKDLADELALVDVMEDK) provides a ligand contact to NAD(+). K57 carries the post-translational modification N6-acetyllysine; alternate. Residue K57 forms a Glycyl lysine isopeptide (Lys-Gly) (interchain with G-Cter in SUMO2); alternate linkage. An N6-acetyllysine modification is found at K81. R99 provides a ligand contact to NAD(+). R106 provides a ligand contact to substrate. K118 is modified (N6-acetyllysine; alternate). Position 118 is an N6-succinyllysine; alternate (K118). At K126 the chain carries N6-acetyllysine. N138 lines the NAD(+) pocket. Residues N138 and R169 each contribute to the substrate site. Residue H193 is the Proton acceptor of the active site. An N6-acetyllysine mark is found at K224 and K232. A Phosphotyrosine modification is found at Y239. Position 243 is an N6-acetyllysine (K243). T248 is a binding site for substrate. Position 309 is a phosphothreonine (T309). A Phosphoserine modification is found at S310. N6-acetyllysine; alternate is present on K318. The residue at position 318 (K318) is an N6-succinyllysine; alternate. A Phosphothreonine modification is found at T322.

The protein belongs to the LDH/MDH superfamily. LDH family. Homotetramer. Interacts with PTEN upstream reading frame protein MP31. In terms of processing, ISGylated.

Its subcellular location is the cytoplasm. It catalyses the reaction (S)-lactate + NAD(+) = pyruvate + NADH + H(+). It participates in fermentation; pyruvate fermentation to lactate; (S)-lactate from pyruvate: step 1/1. Functionally, interconverts simultaneously and stereospecifically pyruvate and lactate with concomitant interconversion of NADH and NAD(+). The chain is L-lactate dehydrogenase A chain (LDHA) from Oryctolagus cuniculus (Rabbit).